Here is a 139-residue protein sequence, read N- to C-terminus: MVRFKSRYLLFEVLYPEAKEFFDYPTIPSDSSITTSSLSKIIRTMVAENFGDVGIGKVASSLTVKYFSPNTSTGILRVSRQHFRLAWAALVLIRELYGKPVIIRVVRVSGTIKKAELAAIERNKSEIHNISLMDEPIEV.

The protein belongs to the eukaryotic/archaeal RNase P protein component 2 family.

The protein resides in the nucleus. The catalysed reaction is Endonucleolytic cleavage of RNA, removing 5'-extranucleotides from tRNA precursor.. Functionally, component of ribonuclease P, a protein complex that generates mature tRNA molecules by cleaving their 5'-ends. Also a component of RNase MRP, which cleaves pre-rRNA sequences. The protein is Ribonuclease P/MRP protein subunit POP5 of Schizosaccharomyces pombe (strain 972 / ATCC 24843) (Fission yeast).